A 378-amino-acid polypeptide reads, in one-letter code: Acid phosphatase-like protein XcAP-2 (378 aa).

Residues 1 to 19 (MKTTILLLVVLTIVQLSKA) form the signal peptide. Cystine bridges form between C147–C374, C168–C220, and C347–C351.

It belongs to the histidine acid phosphatase family.

The protein localises to the secreted. In terms of biological role, probably modulates blood feeding of fleas on vertebrate species by binding and sequestering different mediators involved in the host response. Binds histamine. Binds leukotriene B4, leukotriene C4, leukotriene D4 and leukotriene E4. Does not bind serotonin, adrenaline, noradrenaline, ADP, and stable analogs of thromboxane A2: U-46619 and cTXA2. This is Acid phosphatase-like protein XcAP-2 from Xenopsylla cheopis (Oriental rat flea).